The chain runs to 333 residues: Extracellular globin (333 aa).

A signal peptide spans 1 to 18 (MHSSIVLAIVLFVAIASA). Globin domains are found at residues 25 to 167 (CMKS…HHGR) and 174 to 318 (CMNS…KHAK). Positions 82 and 114 each coordinate heme b. N216 carries N-linked (GlcNAc...) asparagine glycosylation. Residues Q231 and H263 each coordinate heme b. Positions 314-333 (DKHAKAEKDHHEGEHKEEHH) are disordered.

This sequence belongs to the globin family. As to quaternary structure, homooctamer.

Its subcellular location is the secreted. The protein localises to the extracellular space. The chain is Extracellular globin from Pseudoterranova decipiens (Sealworm).